A 39-amino-acid chain; its full sequence is Cytochrome b559 subunit beta (39 aa).

The helical transmembrane segment at 14 to 30 (WLAIHGLAVPTVFSLGS) threads the bilayer. Position 18 (H18) interacts with heme.

Belongs to the PsbE/PsbF family. As to quaternary structure, heterodimer of an alpha subunit and a beta subunit. PSII is composed of 1 copy each of membrane proteins PsbA, PsbB, PsbC, PsbD, PsbE, PsbF, PsbH, PsbI, PsbJ, PsbK, PsbL, PsbM, PsbT, PsbX, PsbY, PsbZ, Psb30/Ycf12, at least 3 peripheral proteins of the oxygen-evolving complex and a large number of cofactors. It forms dimeric complexes. Heme b serves as cofactor.

The protein localises to the plastid. The protein resides in the chloroplast thylakoid membrane. Its function is as follows. This b-type cytochrome is tightly associated with the reaction center of photosystem II (PSII). PSII is a light-driven water:plastoquinone oxidoreductase that uses light energy to abstract electrons from H(2)O, generating O(2) and a proton gradient subsequently used for ATP formation. It consists of a core antenna complex that captures photons, and an electron transfer chain that converts photonic excitation into a charge separation. The chain is Cytochrome b559 subunit beta from Huperzia lucidula (Shining clubmoss).